We begin with the raw amino-acid sequence, 201 residues long: NADH-ubiquinone oxidoreductase 21.3 kDa subunit (201 aa).

As to quaternary structure, complex I is composed of about 40 different subunits.

It is found in the mitochondrion inner membrane. It catalyses the reaction a ubiquinone + NADH + 5 H(+)(in) = a ubiquinol + NAD(+) + 4 H(+)(out). Its function is as follows. Transfer of electrons from NADH to the respiratory chain. The immediate electron acceptor for the enzyme is believed to be ubiquinone. In Neurospora crassa (strain ATCC 24698 / 74-OR23-1A / CBS 708.71 / DSM 1257 / FGSC 987), this protein is NADH-ubiquinone oxidoreductase 21.3 kDa subunit.